We begin with the raw amino-acid sequence, 223 residues long: ATP phosphoribosyltransferase (223 aa).

It belongs to the ATP phosphoribosyltransferase family. Short subfamily. As to quaternary structure, heteromultimer composed of HisG and HisZ subunits.

Its subcellular location is the cytoplasm. The enzyme catalyses 1-(5-phospho-beta-D-ribosyl)-ATP + diphosphate = 5-phospho-alpha-D-ribose 1-diphosphate + ATP. It functions in the pathway amino-acid biosynthesis; L-histidine biosynthesis; L-histidine from 5-phospho-alpha-D-ribose 1-diphosphate: step 1/9. In terms of biological role, catalyzes the condensation of ATP and 5-phosphoribose 1-diphosphate to form N'-(5'-phosphoribosyl)-ATP (PR-ATP). Has a crucial role in the pathway because the rate of histidine biosynthesis seems to be controlled primarily by regulation of HisG enzymatic activity. The polypeptide is ATP phosphoribosyltransferase (Novosphingobium aromaticivorans (strain ATCC 700278 / DSM 12444 / CCUG 56034 / CIP 105152 / NBRC 16084 / F199)).